Here is a 138-residue protein sequence, read N- to C-terminus: Large ribosomal subunit protein uL16 (138 aa).

Positions 1 to 18 (MALMPKRVKHRKSQRGRI) are enriched in basic residues. A disordered region spans residues 1 to 21 (MALMPKRVKHRKSQRGRIKGN).

Belongs to the universal ribosomal protein uL16 family. In terms of assembly, part of the 50S ribosomal subunit.

In terms of biological role, binds 23S rRNA and is also seen to make contacts with the A and possibly P site tRNAs. The chain is Large ribosomal subunit protein uL16 from Rhodopirellula baltica (strain DSM 10527 / NCIMB 13988 / SH1).